We begin with the raw amino-acid sequence, 457 residues long: UDP-glycosyltransferase 74C1 (457 aa).

UDP-alpha-D-glucose contacts are provided by residues T281, 336–338, 353–361, and 375–378; these read VPQ, HCGWNSTLE, and WTDQ.

This sequence belongs to the UDP-glycosyltransferase family.

The polypeptide is UDP-glycosyltransferase 74C1 (UGT74C1) (Arabidopsis thaliana (Mouse-ear cress)).